A 350-amino-acid chain; its full sequence is tRNA uridine(34) hydroxylase (350 aa).

The region spanning 146-240 is the Rhodanese domain; that stretch reads DDPDALFIDM…YARKAREQGL (95 aa). Cys-200 acts as the Cysteine persulfide intermediate in catalysis.

Belongs to the TrhO family.

It catalyses the reaction uridine(34) in tRNA + AH2 + O2 = 5-hydroxyuridine(34) in tRNA + A + H2O. Functionally, catalyzes oxygen-dependent 5-hydroxyuridine (ho5U) modification at position 34 in tRNAs. This Shigella dysenteriae serotype 1 (strain Sd197) protein is tRNA uridine(34) hydroxylase.